The chain runs to 90 residues: Hemoglobin subunit alpha-1 (90 aa).

The Globin domain occupies 1–90 (VLTDDDKNHV…SKLSDLHAEK (90 aa)).

It belongs to the globin family. As to quaternary structure, heterotetramer of two alpha chains and two beta chains. In terms of tissue distribution, red blood cells.

Involved in oxygen transport from the lung to the various peripheral tissues. This is Hemoglobin subunit alpha-1 from Saara hardwickii (Indian spiny-tailed lizard).